Consider the following 496-residue polypeptide: ATP-dependent protease ATPase subunit HslU2 (496 aa).

Residues 1-10 (MIRFSWVRLC) constitute a mitochondrion transit peptide. ATP contacts are provided by residues Val-51 and 94–99 (GVGKTE). Over residues 177–191 (GSFGSSTRNSGSGDS) the composition is skewed to low complexity. The disordered stretch occupies residues 177-204 (GSFGSSTRNSGSGDSSAEEDKNSSSRDN). 3 residues coordinate ATP: Asp-308, Glu-374, and Arg-446.

Belongs to the ClpX chaperone family. HslU subfamily. A double ring-shaped homohexamer of HslV is capped on each side by a ring-shaped HslU homohexamer. The assembly of the HslU/HslV complex (HslVU) is dependent on binding of ATP.

Its subcellular location is the mitochondrion matrix. The protein resides in the kinetoplast. In terms of biological role, ATPase subunit of a proteasome-like degradation complex; this subunit has chaperone activity. The binding of ATP and its subsequent hydrolysis by HslU are essential for unfolding of protein substrates subsequently hydrolyzed by HslV. HslU recognizes the N-terminal part of its protein substrates and unfolds these before they are guided to HslV for hydrolysis. The HslVU protease complex functions in mitochondrial DNA replication by regulating DNA helicase PIF2 protein levels. The protein is ATP-dependent protease ATPase subunit HslU2 (HslU2) of Trypanosoma brucei brucei (strain 927/4 GUTat10.1).